A 137-amino-acid chain; its full sequence is uncharacterized protein (137 aa).

A run of 2 helical transmembrane segments spans residues 36 to 52 (LAPP…PFVL) and 113 to 129 (FYGY…IFCF).

Its subcellular location is the membrane. This is an uncharacterized protein from Saccharomyces cerevisiae (strain ATCC 204508 / S288c) (Baker's yeast).